A 554-amino-acid chain; its full sequence is Dihydroxy-acid dehydratase (554 aa).

Residue D78 participates in Mg(2+) binding. A [2Fe-2S] cluster-binding site is contributed by C119. Mg(2+)-binding residues include D120 and K121. At K121 the chain carries N6-carboxylysine. C191 lines the [2Fe-2S] cluster pocket. E444 serves as a coordination point for Mg(2+). Catalysis depends on S470, which acts as the Proton acceptor.

Belongs to the IlvD/Edd family. As to quaternary structure, homodimer. [2Fe-2S] cluster is required as a cofactor. It depends on Mg(2+) as a cofactor.

The catalysed reaction is (2R)-2,3-dihydroxy-3-methylbutanoate = 3-methyl-2-oxobutanoate + H2O. The enzyme catalyses (2R,3R)-2,3-dihydroxy-3-methylpentanoate = (S)-3-methyl-2-oxopentanoate + H2O. Its pathway is amino-acid biosynthesis; L-isoleucine biosynthesis; L-isoleucine from 2-oxobutanoate: step 3/4. The protein operates within amino-acid biosynthesis; L-valine biosynthesis; L-valine from pyruvate: step 3/4. Functionally, functions in the biosynthesis of branched-chain amino acids. Catalyzes the dehydration of (2R,3R)-2,3-dihydroxy-3-methylpentanoate (2,3-dihydroxy-3-methylvalerate) into 2-oxo-3-methylpentanoate (2-oxo-3-methylvalerate) and of (2R)-2,3-dihydroxy-3-methylbutanoate (2,3-dihydroxyisovalerate) into 2-oxo-3-methylbutanoate (2-oxoisovalerate), the penultimate precursor to L-isoleucine and L-valine, respectively. This Nitratidesulfovibrio vulgaris (strain DP4) (Desulfovibrio vulgaris) protein is Dihydroxy-acid dehydratase.